The following is a 339-amino-acid chain: Ketol-acid reductoisomerase (NADP(+)) (339 aa).

Residues 1-182 (MRVYYDRDAD…GGGRSGIIET (182 aa)) form the KARI N-terminal Rossmann domain. NADP(+) is bound by residues 24–27 (YGSQ), lysine 48, serine 51, threonine 53, and 83–86 (DELQ). Residue histidine 108 is part of the active site. Glycine 134 contributes to the NADP(+) binding site. The 146-residue stretch at 183–328 (NFREECETDL…AKLRGMMPWI (146 aa)) folds into the KARI C-terminal knotted domain. Residues aspartate 191, glutamate 195, glutamate 227, and glutamate 231 each contribute to the Mg(2+) site. Serine 252 lines the substrate pocket.

It belongs to the ketol-acid reductoisomerase family. Requires Mg(2+) as cofactor.

It catalyses the reaction (2R)-2,3-dihydroxy-3-methylbutanoate + NADP(+) = (2S)-2-acetolactate + NADPH + H(+). The enzyme catalyses (2R,3R)-2,3-dihydroxy-3-methylpentanoate + NADP(+) = (S)-2-ethyl-2-hydroxy-3-oxobutanoate + NADPH + H(+). It participates in amino-acid biosynthesis; L-isoleucine biosynthesis; L-isoleucine from 2-oxobutanoate: step 2/4. Its pathway is amino-acid biosynthesis; L-valine biosynthesis; L-valine from pyruvate: step 2/4. Functionally, involved in the biosynthesis of branched-chain amino acids (BCAA). Catalyzes an alkyl-migration followed by a ketol-acid reduction of (S)-2-acetolactate (S2AL) to yield (R)-2,3-dihydroxy-isovalerate. In the isomerase reaction, S2AL is rearranged via a Mg-dependent methyl migration to produce 3-hydroxy-3-methyl-2-ketobutyrate (HMKB). In the reductase reaction, this 2-ketoacid undergoes a metal-dependent reduction by NADPH to yield (R)-2,3-dihydroxy-isovalerate. This is Ketol-acid reductoisomerase (NADP(+)) from Rhizobium johnstonii (strain DSM 114642 / LMG 32736 / 3841) (Rhizobium leguminosarum bv. viciae).